A 188-amino-acid chain; its full sequence is Ribosome-recycling factor (188 aa).

Belongs to the RRF family.

The protein localises to the cytoplasm. Its function is as follows. Responsible for the release of ribosomes from messenger RNA at the termination of protein biosynthesis. May increase the efficiency of translation by recycling ribosomes from one round of translation to another. This chain is Ribosome-recycling factor, found in Dinoroseobacter shibae (strain DSM 16493 / NCIMB 14021 / DFL 12).